We begin with the raw amino-acid sequence, 180 residues long: ATP synthase subunit delta (180 aa).

Belongs to the ATPase delta chain family. In terms of assembly, F-type ATPases have 2 components, F(1) - the catalytic core - and F(0) - the membrane proton channel. F(1) has five subunits: alpha(3), beta(3), gamma(1), delta(1), epsilon(1). CF(0) has four main subunits: a(1), b(1), b'(1) and c(10-14). The alpha and beta chains form an alternating ring which encloses part of the gamma chain. F(1) is attached to F(0) by a central stalk formed by the gamma and epsilon chains, while a peripheral stalk is formed by the delta, b and b' chains.

The protein resides in the cellular thylakoid membrane. In terms of biological role, f(1)F(0) ATP synthase produces ATP from ADP in the presence of a proton or sodium gradient. F-type ATPases consist of two structural domains, F(1) containing the extramembraneous catalytic core and F(0) containing the membrane proton channel, linked together by a central stalk and a peripheral stalk. During catalysis, ATP synthesis in the catalytic domain of F(1) is coupled via a rotary mechanism of the central stalk subunits to proton translocation. Its function is as follows. This protein is part of the stalk that links CF(0) to CF(1). It either transmits conformational changes from CF(0) to CF(1) or is implicated in proton conduction. The sequence is that of ATP synthase subunit delta from Prochlorococcus marinus (strain MIT 9301).